Here is a 304-residue protein sequence, read N- to C-terminus: UDP-N-acetylenolpyruvoylglucosamine reductase (304 aa).

The FAD-binding PCMH-type domain occupies 33-198; sequence RVGGPVDILL…ITATFCFESG (166 aa). The active site involves Arg177. Residue Ser227 is the Proton donor of the active site. The active site involves Glu297.

It belongs to the MurB family. The cofactor is FAD.

The protein resides in the cytoplasm. It carries out the reaction UDP-N-acetyl-alpha-D-muramate + NADP(+) = UDP-N-acetyl-3-O-(1-carboxyvinyl)-alpha-D-glucosamine + NADPH + H(+). The protein operates within cell wall biogenesis; peptidoglycan biosynthesis. In terms of biological role, cell wall formation. In Clostridium botulinum (strain Alaska E43 / Type E3), this protein is UDP-N-acetylenolpyruvoylglucosamine reductase.